Here is a 328-residue protein sequence, read N- to C-terminus: MLNEFPIFDYEDIQLIPNKCVIKSRAEADTSVTLGNHTFKLPVVPANMQTILDENVAEQLAKGGYFYIMHRFDEAGRIPFIKRMHDQGLIASISVGVKDYEYDFVSQLKADAPEYITIDIAHGHADSVISMIQHIKKELPDTFVIAGNVGTPEAVRELENAGADATKVGIGPGKVCITKVKTGFGTGGWQLAAXRWCAKAARKPIIADGGIRTHGDIAKSIRFGASMIMIGSLFAGHIESPGKTIEVDGEQFKEYYGSASQYQKGAYKNVEGKRILLPAKGHLQDTLTEMEQDLQSAISYAGGRQVADLKHVDYVIVKNSIWNGDASH.

C176 (thioimidate intermediate) is an active-site residue. An NADP(+)-binding site is contributed by 205-228 (IIADGGIRTHGDIAKSIRFGASMI).

This sequence belongs to the IMPDH/GMPR family. GuaC type 2 subfamily.

The catalysed reaction is IMP + NH4(+) + NADP(+) = GMP + NADPH + 2 H(+). Catalyzes the irreversible NADPH-dependent deamination of GMP to IMP. It functions in the conversion of nucleobase, nucleoside and nucleotide derivatives of G to A nucleotides, and in maintaining the intracellular balance of A and G nucleotides. The sequence is that of GMP reductase from Streptococcus pneumoniae serotype 19F (strain G54).